Reading from the N-terminus, the 595-residue chain is TNF receptor-associated factor family protein DDB_G0272348 (595 aa).

Residues 14–64 (SFTNNNSNNNNNNNNNSNSNNNNNNNNNNINNNNNHNNNNKNNSNNKNEIN) form a disordered region. Residues 17 to 64 (NNNSNNNNNNNNNSNSNNNNNNNNNNINNNNNHNNNNKNNSNNKNEIN) are compositionally biased toward low complexity. Residues 87-134 (CTICSDLLVNSFHADKFKAVQCKNGHYTTCLNCWEKHLEKKKNCIQCG) form an RING-type; degenerate zinc finger. 2 TRAF-type zinc fingers span residues 189–253 (EHLK…INKE) and 254–311 (SHNA…SKLS). Residues 348 to 410 (LLNGQNKKIT…QQQQSQQQQQ (63 aa)) are a coiled coil. Over residues 409-440 (QQSQQQQQSQQSQQNNNSNSHFINNNNNNINN) the composition is skewed to low complexity. Residues 409-450 (QQSQQQQQSQQSQQNNNSNSHFINNNNNNINNVQMSDSPNGG) are disordered. Positions 441–450 (VQMSDSPNGG) are enriched in polar residues. In terms of domain architecture, MATH spans 456–584 (VYKNKWVISN…NDSITIEIEI (129 aa)).

Belongs to the TNF receptor-associated factor family. A subfamily.

The protein localises to the cytoplasm. In terms of biological role, probable adapter protein and signal transducer that links members of the tumor necrosis factor receptor family to different signaling pathways by association with the receptor cytoplasmic domain and kinases. The sequence is that of TNF receptor-associated factor family protein DDB_G0272348 from Dictyostelium discoideum (Social amoeba).